Consider the following 373-residue polypeptide: Bifunctional enzyme IspD/IspF (373 aa).

The segment at 1–213 (MSDLTLVLLG…CLQKPSATKR (213 aa)) is 2-C-methyl-D-erythritol 4-phosphate cytidylyltransferase. Residues 213-373 (RIGNGLDVHA…TLHYFDWSEI (161 aa)) form a 2-C-methyl-D-erythritol 2,4-cyclodiphosphate synthase region. A divalent metal cation-binding residues include aspartate 219 and histidine 221. 4-CDP-2-C-methyl-D-erythritol 2-phosphate contacts are provided by residues 219-221 (DVH) and 245-246 (HS). Residue histidine 253 coordinates a divalent metal cation. 4-CDP-2-C-methyl-D-erythritol 2-phosphate-binding positions include 267 to 269 (DIG), 272 to 276 (FPDSD), 343 to 346 (TTTE), phenylalanine 350, and arginine 353.

This sequence in the N-terminal section; belongs to the IspD/TarI cytidylyltransferase family. IspD subfamily. The protein in the C-terminal section; belongs to the IspF family. It depends on a divalent metal cation as a cofactor.

The catalysed reaction is 2-C-methyl-D-erythritol 4-phosphate + CTP + H(+) = 4-CDP-2-C-methyl-D-erythritol + diphosphate. The enzyme catalyses 4-CDP-2-C-methyl-D-erythritol 2-phosphate = 2-C-methyl-D-erythritol 2,4-cyclic diphosphate + CMP. The protein operates within isoprenoid biosynthesis; isopentenyl diphosphate biosynthesis via DXP pathway; isopentenyl diphosphate from 1-deoxy-D-xylulose 5-phosphate: step 2/6. It participates in isoprenoid biosynthesis; isopentenyl diphosphate biosynthesis via DXP pathway; isopentenyl diphosphate from 1-deoxy-D-xylulose 5-phosphate: step 4/6. Its function is as follows. Bifunctional enzyme that catalyzes the formation of 4-diphosphocytidyl-2-C-methyl-D-erythritol from CTP and 2-C-methyl-D-erythritol 4-phosphate (MEP) (IspD), and catalyzes the conversion of 4-diphosphocytidyl-2-C-methyl-D-erythritol 2-phosphate (CDP-ME2P) to 2-C-methyl-D-erythritol 2,4-cyclodiphosphate (ME-CPP) with a corresponding release of cytidine 5-monophosphate (CMP) (IspF). The protein is Bifunctional enzyme IspD/IspF of Nitratiruptor sp. (strain SB155-2).